Here is a 239-residue protein sequence, read N- to C-terminus: Uridylate kinase (239 aa).

13-16 (KLSG) lines the ATP pocket. Gly55 contacts UMP. ATP is bound by residues Gly56 and Arg60. UMP contacts are provided by residues Asp75 and 136–143 (TGNPFFTT). The ATP site is built by Thr163, Asn164, Tyr169, and Asp172.

The protein belongs to the UMP kinase family. Homohexamer.

Its subcellular location is the cytoplasm. It catalyses the reaction UMP + ATP = UDP + ADP. The protein operates within pyrimidine metabolism; CTP biosynthesis via de novo pathway; UDP from UMP (UMPK route): step 1/1. Its activity is regulated as follows. Inhibited by UTP. Catalyzes the reversible phosphorylation of UMP to UDP. This is Uridylate kinase from Neisseria meningitidis serogroup A / serotype 4A (strain DSM 15465 / Z2491).